Here is a 227-residue protein sequence, read N- to C-terminus: MQLCVALDLEKKEDNLSLLQELKGLDLWAKVGLRSFIRDGAVFLDEIRKIDGNFKIFLDLKLYDIPYTMANAALECAKLEVDMLTVHLSSAKSALTILMQRLNALKKRPLIMGVSALTSFSEEEFLMVYNAPLKTQAIKLSAMGKESGIDGVVCSVFESLAVKEALGKDFLTLTPGIRLDKSDKEDQERVANAKEAKQNLSDFIVVGRPIYHAKEPREVVLELLKDC.

Substrate is bound by residues Asp8, Lys30, 59–68 (DLKLYDIPYT), Thr118, Arg178, Gln187, Gly207, and Arg208. The active-site Proton donor is the Lys61.

It belongs to the OMP decarboxylase family. Type 1 subfamily. Homodimer.

The enzyme catalyses orotidine 5'-phosphate + H(+) = UMP + CO2. It participates in pyrimidine metabolism; UMP biosynthesis via de novo pathway; UMP from orotate: step 2/2. Its function is as follows. Catalyzes the decarboxylation of orotidine 5'-monophosphate (OMP) to uridine 5'-monophosphate (UMP). The polypeptide is Orotidine 5'-phosphate decarboxylase (Helicobacter pylori (strain P12)).